A 157-amino-acid chain; its full sequence is Stalk-specific protein B (157 aa).

An N-terminal signal peptide occupies residues 1-19 (MRSILILLSLLLTIAFASA).

The protein resides in the secreted. This chain is Stalk-specific protein B (staB), found in Dictyostelium discoideum (Social amoeba).